The following is a 453-amino-acid chain: Growth/differentiation factor 9 (453 aa).

The first 27 residues, 1–27 (MALPNKFFLWFCCFAWLCFPISLDSLP), serve as a signal peptide directing secretion. Positions 28-318 (SRGEAQIVAR…EGVRSSRHRR (291 aa)) are excised as a propeptide. N-linked (GlcNAc...) asparagine glycosylation is found at asparagine 163, asparagine 236, asparagine 255, and asparagine 269. Positions 304-328 (GEEAAEGVRSSRHRRDQESASSELK) are disordered. Residues 318 to 328 (RDQESASSELK) show a composition bias toward basic and acidic residues. A glycan (N-linked (GlcNAc...) asparagine) is linked at asparagine 337. Intrachain disulfides connect cysteine 352–cysteine 418, cysteine 381–cysteine 450, and cysteine 385–cysteine 452.

This sequence belongs to the TGF-beta family. In terms of assembly, homodimer or heterodimer (Potential). But, in contrast to other members of this family, cannot be disulfide-linked. Phosphorylated; phosphorylation is critical for GDF9 function.

It localises to the secreted. Its function is as follows. Required for ovarian folliculogenesis. The protein is Growth/differentiation factor 9 (GDF9) of Ovis aries (Sheep).